Consider the following 350-residue polypeptide: Serine-threonine kinase receptor-associated protein (350 aa).

7 WD repeats span residues 12–56 (GHTR…GTFL), 57–96 (GHKG…ELMT), 98–137 (AHKH…AEPK), 141–179 (GHTS…EVKS), 180–212 (LNFN…HSAV), 221–262 (EAPA…ESYK), and 263–302 (GHFG…TYGL). Phosphoserine is present on residues S312, S335, and S338.

The protein belongs to the WD repeat STRAP family. As to quaternary structure, part of the core SMN complex that contains SMN1, GEMIN2/SIP1, DDX20/GEMIN3, GEMIN4, GEMIN5, GEMIN6, GEMIN7, GEMIN8 and STRAP/UNRIP. Part of the SMN-Sm complex that contains SMN1, GEMIN2/SIP1, DDX20/GEMIN3, GEMIN4, GEMIN5, GEMIN6, GEMIN7, GEMIN8, STRAP/UNRIP and the Sm proteins SNRPB, SNRPD1, SNRPD2, SNRPD3, SNRPE, SNRPF and SNRPG. Associates with the SMN complex in the cytoplasm but not in the nucleus. Interacts with GEMIN6; the interaction is direct. Interacts with GEMIN7; the interaction is direct. Interacts with CSDE1/UNR and MAWBP. Interacts with PDPK1. Interacts with TRIM48.

The protein resides in the cytoplasm. It is found in the nucleus. In terms of biological role, the SMN complex catalyzes the assembly of small nuclear ribonucleoproteins (snRNPs), the building blocks of the spliceosome, and thereby plays an important role in the splicing of cellular pre-mRNAs. Most spliceosomal snRNPs contain a common set of Sm proteins SNRPB, SNRPD1, SNRPD2, SNRPD3, SNRPE, SNRPF and SNRPG that assemble in a heptameric protein ring on the Sm site of the small nuclear RNA to form the core snRNP (Sm core). In the cytosol, the Sm proteins SNRPD1, SNRPD2, SNRPE, SNRPF and SNRPG are trapped in an inactive 6S pICln-Sm complex by the chaperone CLNS1A that controls the assembly of the core snRNP. To assemble core snRNPs, the SMN complex accepts the trapped 5Sm proteins from CLNS1A forming an intermediate. Binding of snRNA inside 5Sm triggers eviction of the SMN complex, thereby allowing binding of SNRPD3 and SNRPB to complete assembly of the core snRNP. STRAP plays a role in the cellular distribution of the SMN complex. Negatively regulates TGF-beta signaling but positively regulates the PDPK1 kinase activity by enhancing its autophosphorylation and by significantly reducing the association of PDPK1 with 14-3-3 protein. The chain is Serine-threonine kinase receptor-associated protein (STRAP) from Homo sapiens (Human).